The primary structure comprises 252 residues: DNA repair protein RecO (252 aa).

Belongs to the RecO family.

In terms of biological role, involved in DNA repair and RecF pathway recombination. This chain is DNA repair protein RecO, found in Rhodospirillum rubrum (strain ATCC 11170 / ATH 1.1.1 / DSM 467 / LMG 4362 / NCIMB 8255 / S1).